A 311-amino-acid polypeptide reads, in one-letter code: Small ribosomal subunit protein uS3 (311 aa).

Positions Met17–Lys86 constitute a KH type-2 domain. Positions Pro190–Leu267 are disordered. The segment covering Thr194–Glu204 has biased composition (low complexity). A compositionally biased stretch (basic and acidic residues) spans Pro205–Ala231. Residues Lys232 to Ala247 show a composition bias toward low complexity. The span at Glu248–Leu267 shows a compositional bias: acidic residues.

It belongs to the universal ribosomal protein uS3 family. As to quaternary structure, part of the 30S ribosomal subunit.

Functionally, binds the lower part of the 30S subunit head. The chain is Small ribosomal subunit protein uS3 from Methanosarcina barkeri (strain Fusaro / DSM 804).